Here is a 492-residue protein sequence, read N- to C-terminus: KRAB-A domain-containing protein 2 (492 aa).

Residues Leu-36–Thr-117 enclose the KRAB domain. Ser-115 is subject to Phosphoserine. Thr-117 carries the phosphothreonine modification. Residues Arg-247–Lys-415 form the Integrase catalytic domain. Residues Arg-427 to Arg-457 adopt a coiled-coil conformation. Residues Glu-455–Ser-465 are compositionally biased toward basic and acidic residues. Residues Glu-455–Trp-492 form a disordered region. Residues Glu-479 to Trp-492 show a composition bias toward polar residues.

This chain is KRAB-A domain-containing protein 2 (KRBA2), found in Homo sapiens (Human).